The following is a 345-amino-acid chain: S-adenosylmethionine:tRNA ribosyltransferase-isomerase (345 aa).

It belongs to the QueA family. In terms of assembly, monomer.

The protein resides in the cytoplasm. The catalysed reaction is 7-aminomethyl-7-carbaguanosine(34) in tRNA + S-adenosyl-L-methionine = epoxyqueuosine(34) in tRNA + adenine + L-methionine + 2 H(+). It participates in tRNA modification; tRNA-queuosine biosynthesis. In terms of biological role, transfers and isomerizes the ribose moiety from AdoMet to the 7-aminomethyl group of 7-deazaguanine (preQ1-tRNA) to give epoxyqueuosine (oQ-tRNA). The polypeptide is S-adenosylmethionine:tRNA ribosyltransferase-isomerase (Alkalilimnicola ehrlichii (strain ATCC BAA-1101 / DSM 17681 / MLHE-1)).